We begin with the raw amino-acid sequence, 271 residues long: Putative phosphoenolpyruvate synthase regulatory protein (271 aa).

Position 151 to 158 (151 to 158) interacts with ADP; it reads GVSRSGKT.

Belongs to the pyruvate, phosphate/water dikinase regulatory protein family. PSRP subfamily.

It carries out the reaction [pyruvate, water dikinase] + ADP = [pyruvate, water dikinase]-phosphate + AMP + H(+). The enzyme catalyses [pyruvate, water dikinase]-phosphate + phosphate + H(+) = [pyruvate, water dikinase] + diphosphate. Functionally, bifunctional serine/threonine kinase and phosphorylase involved in the regulation of the phosphoenolpyruvate synthase (PEPS) by catalyzing its phosphorylation/dephosphorylation. This Burkholderia multivorans (strain ATCC 17616 / 249) protein is Putative phosphoenolpyruvate synthase regulatory protein.